Reading from the N-terminus, the 37-residue chain is Turripeptide Lol6.2 (37 aa).

Cystine bridges form between Cys4-Cys16, Cys8-Cys21, and Cys15-Cys29.

In terms of tissue distribution, expressed by the venom duct.

Its subcellular location is the secreted. Its function is as follows. Acts as a neurotoxin by inhibiting an ion channel. This chain is Turripeptide Lol6.2, found in Iotyrris olangoensis (Sea snail).